A 407-amino-acid chain; its full sequence is Elongation factor Tu, chloroplastic (407 aa).

Residues 10–212 (KPHVNIGTIG…SVDNYIPAPE (203 aa)) form the tr-type G domain. Residues 19–26 (GHVDHGKT) are G1. GTP is bound at residue 19–26 (GHVDHGKT). A Mg(2+)-binding site is contributed by T26. The interval 59–63 (GITIN) is G2. A G3 region spans residues 80-83 (DCPG). GTP is bound by residues 80-84 (DCPGH) and 135-138 (NKAD). Positions 135-138 (NKAD) are G4. Residues 173-175 (SAL) form a G5 region.

Belongs to the TRAFAC class translation factor GTPase superfamily. Classic translation factor GTPase family. EF-Tu/EF-1A subfamily.

Its subcellular location is the plastid. The protein localises to the chloroplast. It catalyses the reaction GTP + H2O = GDP + phosphate + H(+). Its function is as follows. GTP hydrolase that promotes the GTP-dependent binding of aminoacyl-tRNA to the A-site of ribosomes during protein biosynthesis. The sequence is that of Elongation factor Tu, chloroplastic (tufA) from Emiliania huxleyi (Coccolithophore).